The primary structure comprises 666 residues: Endogenous retrovirus group K member 9 Gag polyprotein (666 aa).

The N-myristoyl glycine moiety is linked to residue Gly2. Positions 165–264 (GKGPELVGPS…APPSRQGSEL (100 aa)) are disordered. The segment covering 232–247 (GMPPAPQGRAPYPQPP) has biased composition (pro residues). CCHC-type zinc fingers lie at residues 544 to 561 (GKCYNCGQIGHLKKNCPV) and 580 to 597 (DLCPRCKKGKHWASQCRS). The tract at residues 598 to 641 (KFDKNGQPLSGNEQRGQPQAPQQTGAFPIQPFVPQGFQGQQPPL) is disordered. Residues 604-622 (QPLSGNEQRGQPQAPQQTG) are compositionally biased toward polar residues. Residues 624 to 640 (FPIQPFVPQGFQGQQPP) are compositionally biased toward low complexity.

Belongs to the beta type-B retroviral Gag protein family. HERV class-II K(HML-2) gag subfamily. In terms of processing, myristoylation is essential for retroviral assembly. Alteration of the glycine residue leads to a block in the budding of particles and an accumulation of Gag inside the cell. Post-translationally, specific enzymatic cleavages may yield mature proteins.

It is found in the cell membrane. In terms of biological role, the products of the Gag polyproteins of infectious retroviruses perform highly complex orchestrated tasks during the assembly, budding, maturation, and infection stages of the viral replication cycle. During viral assembly, the proteins form membrane associations and self-associations that ultimately result in budding of an immature virion from the infected cell. Gag precursors also function during viral assembly to selectively bind and package two plus strands of genomic RNA. Endogenous Gag proteins may have kept, lost or modified their original function during evolution. In Homo sapiens (Human), this protein is Endogenous retrovirus group K member 9 Gag polyprotein (ERVK-9).